The following is a 170-amino-acid chain: ATP synthase subunit b (170 aa).

The helical transmembrane segment at 20-42 (QLLAMLVLLALLKKFALGPLLNI) threads the bilayer.

Belongs to the ATPase B chain family. F-type ATPases have 2 components, F(1) - the catalytic core - and F(0) - the membrane proton channel. F(1) has five subunits: alpha(3), beta(3), gamma(1), delta(1), epsilon(1). F(0) has three main subunits: a(1), b(2) and c(10-14). The alpha and beta chains form an alternating ring which encloses part of the gamma chain. F(1) is attached to F(0) by a central stalk formed by the gamma and epsilon chains, while a peripheral stalk is formed by the delta and b chains.

It is found in the cell membrane. In terms of biological role, f(1)F(0) ATP synthase produces ATP from ADP in the presence of a proton or sodium gradient. F-type ATPases consist of two structural domains, F(1) containing the extramembraneous catalytic core and F(0) containing the membrane proton channel, linked together by a central stalk and a peripheral stalk. During catalysis, ATP synthesis in the catalytic domain of F(1) is coupled via a rotary mechanism of the central stalk subunits to proton translocation. Functionally, component of the F(0) channel, it forms part of the peripheral stalk, linking F(1) to F(0). The protein is ATP synthase subunit b of Bacillus velezensis (strain DSM 23117 / BGSC 10A6 / LMG 26770 / FZB42) (Bacillus amyloliquefaciens subsp. plantarum).